Reading from the N-terminus, the 340-residue chain is MNTVNASMTVIGAGSYGTALAITLARNGHSVVLWGHNPAQIQTLQHDRCNQAFLPDVPFPDTLLLEADLARALAASRDVLVVVPSHVFGDVLRQLKPHLRPDARIVWATKGLEAETGRLLQNVAREALGETIPLAVLSGPTFAKELAAGLPTAIALAATDAQFADDLQQGCMHCGKSFRVYSNPDFIGVQLGGAVKNVIAIGAGMSDGIGFGANARTALITRGLAEMSRLGSALGADPSTFMGMAGLGDLVLTCTDNQSRNRRFGIMLGQGKGVQEAQDSIGQVVEGYRNTKEVLALAQRQGVEMPITEQIYQVLYCHKDAREAALSLLGRARKDEKPSV.

Positions 15, 16, 36, and 110 each coordinate NADPH. Sn-glycerol 3-phosphate contacts are provided by Lys-110, Gly-139, and Thr-141. Ala-143 contacts NADPH. The sn-glycerol 3-phosphate site is built by Lys-196, Asp-249, Ser-259, Arg-260, and Asn-261. Lys-196 acts as the Proton acceptor in catalysis. Position 260 (Arg-260) interacts with NADPH. NADPH is bound by residues Val-284 and Glu-286.

Belongs to the NAD-dependent glycerol-3-phosphate dehydrogenase family.

It is found in the cytoplasm. The catalysed reaction is sn-glycerol 3-phosphate + NAD(+) = dihydroxyacetone phosphate + NADH + H(+). It carries out the reaction sn-glycerol 3-phosphate + NADP(+) = dihydroxyacetone phosphate + NADPH + H(+). It functions in the pathway membrane lipid metabolism; glycerophospholipid metabolism. Functionally, catalyzes the reduction of the glycolytic intermediate dihydroxyacetone phosphate (DHAP) to sn-glycerol 3-phosphate (G3P), the key precursor for phospholipid synthesis. The polypeptide is Glycerol-3-phosphate dehydrogenase [NAD(P)+] (Serratia marcescens).